A 372-amino-acid chain; its full sequence is Alanine dehydrogenase 1 (372 aa).

Histidine 94 is a catalytic residue. Residue 170-200 (TYVIFGGGVAATNAANVALGLNAKVIIIELN) coordinates NAD(+).

This sequence belongs to the AlaDH/PNT family.

It catalyses the reaction L-alanine + NAD(+) + H2O = pyruvate + NH4(+) + NADH + H(+). The protein operates within amino-acid degradation; L-alanine degradation via dehydrogenase pathway; NH(3) and pyruvate from L-alanine: step 1/1. In terms of biological role, may play a role in cell wall synthesis as L-alanine is an important constituent of the peptidoglycan layer. This Staphylococcus aureus (strain NCTC 8325 / PS 47) protein is Alanine dehydrogenase 1 (ald1).